Here is a 463-residue protein sequence, read N- to C-terminus: Fumarate hydratase class II (463 aa).

Substrate is bound by residues 95 to 97 (SGT), 126 to 129 (HPND), 136 to 138 (SSN), and threonine 184. Histidine 185 functions as the Proton donor/acceptor in the catalytic mechanism. Residue serine 315 is part of the active site. Residues serine 316 and 321–323 (KIN) contribute to the substrate site.

Belongs to the class-II fumarase/aspartase family. Fumarase subfamily. In terms of assembly, homotetramer.

It localises to the cytoplasm. The enzyme catalyses (S)-malate = fumarate + H2O. Its pathway is carbohydrate metabolism; tricarboxylic acid cycle; (S)-malate from fumarate: step 1/1. Functionally, involved in the TCA cycle. Catalyzes the stereospecific interconversion of fumarate to L-malate. The chain is Fumarate hydratase class II from Chlamydia muridarum (strain MoPn / Nigg).